Here is a 509-residue protein sequence, read N- to C-terminus: Putative 6-phosphofructo-2-kinase/fructose-2,6-bisphosphatase YLR345W (509 aa).

Phosphoserine is present on Ser6. A 6-phosphofructo-2-kinase region spans residues 6-291; the sequence is SDDEELLNGL…FFLMNLRQKK (286 aa). 90 to 98 is a binding site for ATP; the sequence is GLPATSKTL. Asp173 functions as the Proton donor/acceptor in the catalytic mechanism. 212–217 is a binding site for ATP; sequence NIALAL. Arg237 contacts beta-D-fructose 6-phosphate. The interval 292–466 is fructose-2,6-bisphosphatase; that stretch reads GCVYFARCGT…IAHESTLRVL (175 aa). Residue Arg298 participates in beta-D-fructose 2,6-bisphosphate binding. Position 415–418 (415–418) interacts with ATP; it reads YKES. Beta-D-fructose 2,6-bisphosphate is bound by residues Tyr433 and Arg464. 460–464 provides a ligand contact to ATP; the sequence is ESTLR.

In the C-terminal section; belongs to the phosphoglycerate mutase family. Homodimer.

The protein resides in the cytoplasm. The catalysed reaction is beta-D-fructose 2,6-bisphosphate + H2O = beta-D-fructose 6-phosphate + phosphate. The enzyme catalyses beta-D-fructose 6-phosphate + ATP = beta-D-fructose 2,6-bisphosphate + ADP + H(+). Functionally, synthesis and degradation of fructose 2,6-bisphosphate. This Saccharomyces cerevisiae (strain ATCC 204508 / S288c) (Baker's yeast) protein is Putative 6-phosphofructo-2-kinase/fructose-2,6-bisphosphatase YLR345W.